Consider the following 228-residue polypeptide: Urease accessory protein UreF (228 aa).

The protein belongs to the UreF family. As to quaternary structure, ureD, UreF and UreG form a complex that acts as a GTP-hydrolysis-dependent molecular chaperone, activating the urease apoprotein by helping to assemble the nickel containing metallocenter of UreC. The UreE protein probably delivers the nickel.

The protein localises to the cytoplasm. Its function is as follows. Required for maturation of urease via the functional incorporation of the urease nickel metallocenter. This is Urease accessory protein UreF from Prochlorococcus marinus (strain MIT 9312).